A 240-amino-acid polypeptide reads, in one-letter code: 1-(5-phosphoribosyl)-5-[(5-phosphoribosylamino)methylideneamino] imidazole-4-carboxamide isomerase (240 aa).

D10 acts as the Proton acceptor in catalysis. Residue D132 is the Proton donor of the active site.

Belongs to the HisA/HisF family.

It is found in the cytoplasm. It catalyses the reaction 1-(5-phospho-beta-D-ribosyl)-5-[(5-phospho-beta-D-ribosylamino)methylideneamino]imidazole-4-carboxamide = 5-[(5-phospho-1-deoxy-D-ribulos-1-ylimino)methylamino]-1-(5-phospho-beta-D-ribosyl)imidazole-4-carboxamide. The protein operates within amino-acid biosynthesis; L-histidine biosynthesis; L-histidine from 5-phospho-alpha-D-ribose 1-diphosphate: step 4/9. This chain is 1-(5-phosphoribosyl)-5-[(5-phosphoribosylamino)methylideneamino] imidazole-4-carboxamide isomerase, found in Methanocella arvoryzae (strain DSM 22066 / NBRC 105507 / MRE50).